Here is a 183-residue protein sequence, read N- to C-terminus: Probable cobalt-precorrin-6B C(15)-methyltransferase (decarboxylating) (183 aa).

S-adenosyl-L-methionine contacts are provided by residues Thr19, 43 to 47 (GCGSG), Asp64, and Ala92.

Belongs to the methyltransferase superfamily. Archaeal-type CbiT family.

The enzyme catalyses Co-precorrin-6B + S-adenosyl-L-methionine = Co-precorrin-7 + S-adenosyl-L-homocysteine + CO2. The protein operates within cofactor biosynthesis; adenosylcobalamin biosynthesis; cob(II)yrinate a,c-diamide from sirohydrochlorin (anaerobic route): step 8/10. Its function is as follows. Catalyzes the methylation of C-15 in cobalt-precorrin-6B followed by the decarboxylation of C-12 to form cobalt-precorrin-7. The polypeptide is Probable cobalt-precorrin-6B C(15)-methyltransferase (decarboxylating) (Methanocaldococcus jannaschii (strain ATCC 43067 / DSM 2661 / JAL-1 / JCM 10045 / NBRC 100440) (Methanococcus jannaschii)).